The sequence spans 136 residues: Histone H3.3 type 1 (136 aa).

The interval methionine 1 to arginine 43 is disordered. N6,N6,N6-trimethyllysine; alternate occurs at positions 5 and 10. N6,N6-dimethyllysine; alternate is present on residues lysine 5 and lysine 10. An N6-acetyllysine; alternate mark is found at lysine 5 and lysine 10. The residue at position 5 (lysine 5) is an N6-methyllysine; alternate. The residue at position 11 (serine 11) is a Phosphoserine. N6-acetyllysine is present on residues lysine 15 and lysine 24. Lysine 28 carries the post-translational modification N6,N6,N6-trimethyllysine; alternate. Lysine 28 bears the N6,N6-dimethyllysine; alternate mark. An N6-methyllysine; alternate modification is found at lysine 28. Position 29 is a phosphoserine (serine 29). The residue at position 37 (lysine 37) is an N6,N6,N6-trimethyllysine; alternate. An N6-methyllysine; alternate modification is found at lysine 37. An N6-methyllysine modification is found at lysine 80.

The protein belongs to the histone H3 family. As to quaternary structure, the nucleosome is a histone octamer containing two molecules each of H2A, H2B, H3 and H4 assembled in one H3-H4 heterotetramer and two H2A-H2B heterodimers. The octamer wraps approximately 147 bp of DNA. Acetylation is generally linked to gene activation. Post-translationally, methylation at Lys-5 is linked to gene activation. Methylation at Lys-10 is linked to gene repression. Highly expressed in all adult nuclei.

The protein resides in the nucleus. It is found in the chromosome. Functionally, variant histone H3 which replaces conventional H3 in a wide range of nucleosomes in active genes. Constitutes the predominant form of histone H3 in non-dividing cells and is incorporated into chromatin independently of DNA synthesis. Deposited at sites of nucleosomal displacement throughout transcribed genes, suggesting that it represents an epigenetic imprint of transcriptionally active chromatin. Nucleosomes wrap and compact DNA into chromatin, limiting DNA accessibility to the cellular machineries which require DNA as a template. Histones thereby play a central role in transcription regulation, DNA repair, DNA replication and chromosomal stability. DNA accessibility is regulated via a complex set of post-translational modifications of histones, also called histone code, and nucleosome remodeling. The sequence is that of Histone H3.3 type 1 (his-71) from Caenorhabditis elegans.